The sequence spans 90 residues: Probable Fe(2+)-trafficking protein (90 aa).

The protein belongs to the Fe(2+)-trafficking protein family.

In terms of biological role, could be a mediator in iron transactions between iron acquisition and iron-requiring processes, such as synthesis and/or repair of Fe-S clusters in biosynthetic enzymes. The polypeptide is Probable Fe(2+)-trafficking protein (Xylella fastidiosa (strain M23)).